The following is an 89-amino-acid chain: Small ribosomal subunit protein uS17 (89 aa).

The protein belongs to the universal ribosomal protein uS17 family. Part of the 30S ribosomal subunit.

Functionally, one of the primary rRNA binding proteins, it binds specifically to the 5'-end of 16S ribosomal RNA. This is Small ribosomal subunit protein uS17 from Phytoplasma mali (strain AT).